The following is a 538-amino-acid chain: Exo-alpha-bergamotene synthase (538 aa).

Aspartate 291, aspartate 295, aspartate 435, threonine 439, and glutamate 443 together coordinate Mg(2+). The DDXXD motif motif lies at 291–295 (DDIYD).

Belongs to the terpene synthase family. The cofactor is Mg(2+). Mn(2+) serves as cofactor.

The enzyme catalyses (2E,6E)-farnesyl diphosphate = (1S,5S,6R)-alpha-bergamotene + diphosphate. Functionally, catalyzes a mixture of sesquiterpenoids from (2E,6E)-farnesyl diphosphate. Catalyzes the formation of exo-alpha-bergamotene, as well as (E)-nerolidol, (Z)-alpha-bisabolene, (E)-beta-farnesene and beta-sesquiphellandrene. Also has activity towards geranyl diphosphate, but to a much lesser extent. The sequence is that of Exo-alpha-bergamotene synthase from Lavandula angustifolia (Lavender).